The chain runs to 183 residues: Triggering receptor expressed on myeloid cells 3 (183 aa).

Residues 1-19 (MSPLLLWLGLMLCVSGLQA) form the signal peptide. Over 20 to 138 (GDEEEHKCFL…AWCQGKPVMV (119 aa)) the chain is Extracellular. The Ig-like V-type domain occupies 30–128 (EGENLTLTCP…VIILRQRIRL (99 aa)). A glycan (N-linked (GlcNAc...) asparagine) is linked at asparagine 33. Residues cysteine 38 and cysteine 110 are joined by a disulfide bond. The helical transmembrane segment at 139-159 (IVLTCGFILNKGLVFSVLFVF) threads the bilayer. The Cytoplasmic portion of the chain corresponds to 160–183 (LCKAGPKVLQPSKTSKVQGVSEKQ).

Interacts with TYROBP/DAP12. As to expression, expressed in macrophages and in T-cells.

It is found in the cell membrane. In terms of biological role, forms a receptor signaling complex with TYROBP/DAP12 which mediates activation of macrophages as part of the innate immune response. In Mus musculus (Mouse), this protein is Triggering receptor expressed on myeloid cells 3.